We begin with the raw amino-acid sequence, 114 residues long: RHSDPARRGELSVCDSISEWVTAANKKTAVDMSGATVTVLEKVPVSKGQLKQYFYETKCNPMGYMKEGCRGIEKRYWNSQCRTTQSYVRAFTMDSKKKVGWRFIRIDTSCVCTL.

3 disulfide bridges follow: Cys14-Cys81, Cys59-Cys110, and Cys69-Cys112.

The protein belongs to the NGF-beta family.

It localises to the secreted. In terms of biological role, promotes the survival of neuronal populations that are all located either in the central nervous system or directly connected to it. The polypeptide is Neurotrophic factor BDNF precursor form (bdnf) (Xenopus laevis (African clawed frog)).